The sequence spans 1187 residues: uncharacterized protein (1187 aa).

Positions 38–57 (KNNQDIPTSNTNISPKPISQ) are enriched in polar residues. Disordered regions lie at residues 38–127 (KNNQ…NSPT), 189–215 (ISRS…IHLN), 248–287 (TQPP…SQLQ), 358–415 (NNNS…NSNS), 443–490 (FPNN…INNN), 536–689 (QFPF…SSLN), 752–840 (SINN…NKSI), and 1079–1187 (HNNN…NLQK). Composition is skewed to low complexity over residues 71–84 (KPIV…STLI), 104–124 (PSSS…SIPN), 190–215 (SRSS…IHLN), and 248–274 (TQPP…QAPH). Over residues 443–455 (FPNNTDENYPSDH) the composition is skewed to polar residues. Composition is skewed to low complexity over residues 458-490 (NDNN…INNN), 543-570 (TTES…SSSA), 585-653 (INNL…SNIN), 662-689 (PNSP…SSLN), 752-790 (SINN…TTNN), and 797-809 (NYKI…NIDN). Positions 815–832 (NDDDNDDDDDDDVDDNDD) are enriched in acidic residues. Low complexity-rich tracts occupy residues 1079-1149 (HNNN…PSNN) and 1156-1174 (KNNN…NNTN).

This is an uncharacterized protein from Dictyostelium discoideum (Social amoeba).